The following is a 344-amino-acid chain: DNA-directed RNA polymerase subunit alpha (344 aa).

Positions 1–246 are alpha N-terminal domain (alpha-NTD); it reads MPMERFLKDF…EFLFPLVDFE (246 aa). Residues 259–344 form an alpha C-terminal domain (alpha-CTD) region; that stretch reads ESSNLLDMSI…VLSKNVKISE (86 aa).

The protein belongs to the RNA polymerase alpha chain family. Homodimer. The RNAP catalytic core consists of 2 alpha, 1 beta, 1 beta' and 1 omega subunit. When a sigma factor is associated with the core the holoenzyme is formed, which can initiate transcription.

It carries out the reaction RNA(n) + a ribonucleoside 5'-triphosphate = RNA(n+1) + diphosphate. Functionally, DNA-dependent RNA polymerase catalyzes the transcription of DNA into RNA using the four ribonucleoside triphosphates as substrates. This is DNA-directed RNA polymerase subunit alpha from Borreliella afzelii (strain PKo) (Borrelia afzelii).